The sequence spans 361 residues: Histidinol-phosphate aminotransferase (361 aa).

The residue at position 219 (Lys-219) is an N6-(pyridoxal phosphate)lysine.

The protein belongs to the class-II pyridoxal-phosphate-dependent aminotransferase family. Histidinol-phosphate aminotransferase subfamily. Homodimer. Pyridoxal 5'-phosphate is required as a cofactor.

The enzyme catalyses L-histidinol phosphate + 2-oxoglutarate = 3-(imidazol-4-yl)-2-oxopropyl phosphate + L-glutamate. It participates in amino-acid biosynthesis; L-histidine biosynthesis; L-histidine from 5-phospho-alpha-D-ribose 1-diphosphate: step 7/9. In Cereibacter sphaeroides (strain ATCC 17023 / DSM 158 / JCM 6121 / CCUG 31486 / LMG 2827 / NBRC 12203 / NCIMB 8253 / ATH 2.4.1.) (Rhodobacter sphaeroides), this protein is Histidinol-phosphate aminotransferase.